A 407-amino-acid polypeptide reads, in one-letter code: Melanoma-associated antigen B6 (407 aa).

The segment at Met-1–Glu-175 is disordered. Polar residues-rich tracts occupy residues Thr-18–Gln-29, Asp-57–Gly-71, Pro-94–Gly-113, and Pro-136–Gly-155. The MAGE domain occupies Val-195–Ala-394.

As to expression, expressed in testis. Not expressed in other normal tissues, but is expressed in tumors of different histological origins.

In Homo sapiens (Human), this protein is Melanoma-associated antigen B6 (MAGEB6).